Here is a 60-residue protein sequence, read N- to C-terminus: Alpha-conotoxin-like 289 (60 aa).

An N-terminal signal peptide occupies residues 1 to 16 (MFTVFLLVVLATTVVS). Positions 17–42 (FTSDRAFRGRNAAAKASGLVGLTDKR) are excised as a propeptide. Position 43 is a pyrrolidone carboxylic acid (glutamine 43). Cystine bridges form between cysteine 45/cysteine 51 and cysteine 46/cysteine 59. A ser-Xaa-Pro motif, crucial for potent interaction with nAChR region spans residues 47–49 (SYP). At cysteine 59 the chain carries Cysteine amide.

The protein belongs to the conotoxin A superfamily. In terms of tissue distribution, expressed by the venom duct.

The protein localises to the secreted. Functionally, alpha-conotoxins act on postsynaptic membranes, they bind to the nicotinic acetylcholine receptors (nAChR) and thus inhibit them. This is Alpha-conotoxin-like 289 from Conus ammiralis (Admiral cone).